The chain runs to 293 residues: Probable porphobilinogen deaminase (293 aa).

S-(dipyrrolylmethanemethyl)cysteine is present on Cys233.

This sequence belongs to the HMBS family. Requires dipyrromethane as cofactor.

It carries out the reaction 4 porphobilinogen + H2O = hydroxymethylbilane + 4 NH4(+). It participates in porphyrin-containing compound metabolism; protoporphyrin-IX biosynthesis; coproporphyrinogen-III from 5-aminolevulinate: step 2/4. Functionally, tetrapolymerization of the monopyrrole PBG into the hydroxymethylbilane pre-uroporphyrinogen in several discrete steps. The sequence is that of Probable porphobilinogen deaminase from Saccharolobus islandicus (strain Y.N.15.51 / Yellowstone #2) (Sulfolobus islandicus).